Here is a 336-residue protein sequence, read N- to C-terminus: Probable allantoicase (336 aa).

The protein belongs to the allantoicase family.

It carries out the reaction allantoate + H2O = (S)-ureidoglycolate + urea. Its pathway is nitrogen metabolism; (S)-allantoin degradation; (S)-ureidoglycolate from allantoate (aminidohydrolase route): step 1/1. In Acinetobacter baumannii (strain ACICU), this protein is Probable allantoicase.